The chain runs to 123 residues: Unclassified hydrophobin 9 (123 aa).

Residues 1–24 (MFFFNTKPIVFLVVLSVVATFAAA) form the signal peptide. Cystine bridges form between Cys37-Cys103, Cys45-Cys97, Cys46-Cys88, and Cys104-Cys117.

Belongs to the fungal hydrophobin family. As to quaternary structure, self-assembles to form functional amyloid fibrils called rodlets. Self-assembly into fibrillar rodlets occurs spontaneously at hydrophobic:hydrophilic interfaces and the rodlets further associate laterally to form amphipathic monolayers.

The protein resides in the secreted. Its subcellular location is the cell wall. Functionally, aerial growth, conidiation, and dispersal of filamentous fungi in the environment rely upon a capability of their secreting small amphipathic proteins called hydrophobins (HPBs) with low sequence identity. Class I can self-assemble into an outermost layer of rodlet bundles on aerial cell surfaces, conferring cellular hydrophobicity that supports fungal growth, development and dispersal; whereas Class II form highly ordered films at water-air interfaces through intermolecular interactions but contribute nothing to the rodlet structure. This is Unclassified hydrophobin 9 from Pleurotus ostreatus (strain PC15) (Oyster mushroom).